A 336-amino-acid polypeptide reads, in one-letter code: N-acetyl-gamma-glutamyl-phosphate reductase (336 aa).

Residue C156 is part of the active site.

This sequence belongs to the NAGSA dehydrogenase family. Type 1 subfamily.

The protein resides in the cytoplasm. The catalysed reaction is N-acetyl-L-glutamate 5-semialdehyde + phosphate + NADP(+) = N-acetyl-L-glutamyl 5-phosphate + NADPH + H(+). The protein operates within amino-acid biosynthesis; L-arginine biosynthesis; N(2)-acetyl-L-ornithine from L-glutamate: step 3/4. Functionally, catalyzes the NADPH-dependent reduction of N-acetyl-5-glutamyl phosphate to yield N-acetyl-L-glutamate 5-semialdehyde. The chain is N-acetyl-gamma-glutamyl-phosphate reductase from Moritella profunda.